The primary structure comprises 161 residues: Nascent polypeptide-associated complex subunit beta (161 aa).

Disordered stretches follow at residues 14-41 and 125-161; these read LSANNKVGGTRRKLAKKSGTASANKDDS and QNAQAAAPATEGHEAGEKKDNDIPELIEGQSFDADVE. One can recognise an NAC-A/B domain in the interval 37-102; it reads NKDDSKLQAQ…PQEKSLQDLF (66 aa). Low complexity predominate over residues 125–134; it reads QNAQAAAPAT. Residues 135–146 are compositionally biased toward basic and acidic residues; sequence EGHEAGEKKDND.

Belongs to the NAC-beta family. As to quaternary structure, part of the nascent polypeptide-associated complex (NAC), consisting of EGD2 and EGD1. NAC associates with ribosomes via EGD1.

The protein resides in the cytoplasm. The protein localises to the nucleus. Component of the nascent polypeptide-associated complex (NAC), a dynamic component of the ribosomal exit tunnel, protecting the emerging polypeptides from interaction with other cytoplasmic proteins to ensure appropriate nascent protein targeting. The NAC complex also promotes mitochondrial protein import by enhancing productive ribosome interactions with the outer mitochondrial membrane and blocks the inappropriate interaction of ribosomes translating non-secretory nascent polypeptides with translocation sites in the membrane of the endoplasmic reticulum. EGD1 may act as a transcription factor that exert a negative effect on the expression of several genes that are transcribed by RNA polymerase II. This chain is Nascent polypeptide-associated complex subunit beta (EGD1), found in Eremothecium gossypii (strain ATCC 10895 / CBS 109.51 / FGSC 9923 / NRRL Y-1056) (Yeast).